A 282-amino-acid polypeptide reads, in one-letter code: Pantothenate synthetase (282 aa).

Residue 33–40 (MGALHAGH) coordinates ATP. His40 (proton donor) is an active-site residue. (R)-pantoate is bound at residue Gln64. Gln64 contributes to the beta-alanine binding site. An ATP-binding site is contributed by 150–153 (GEKD). Gln156 lines the (R)-pantoate pocket. Residues Val179 and 187-190 (LSSR) contribute to the ATP site.

The protein belongs to the pantothenate synthetase family. As to quaternary structure, homodimer.

It is found in the cytoplasm. It carries out the reaction (R)-pantoate + beta-alanine + ATP = (R)-pantothenate + AMP + diphosphate + H(+). It functions in the pathway cofactor biosynthesis; (R)-pantothenate biosynthesis; (R)-pantothenate from (R)-pantoate and beta-alanine: step 1/1. Catalyzes the condensation of pantoate with beta-alanine in an ATP-dependent reaction via a pantoyl-adenylate intermediate. This is Pantothenate synthetase from Rhodospirillum rubrum (strain ATCC 11170 / ATH 1.1.1 / DSM 467 / LMG 4362 / NCIMB 8255 / S1).